Reading from the N-terminus, the 218-residue chain is Peptide methionine sulfoxide reductase MsrA (218 aa).

Cys57 is a catalytic residue.

Belongs to the MsrA Met sulfoxide reductase family.

The enzyme catalyses L-methionyl-[protein] + [thioredoxin]-disulfide + H2O = L-methionyl-(S)-S-oxide-[protein] + [thioredoxin]-dithiol. The catalysed reaction is [thioredoxin]-disulfide + L-methionine + H2O = L-methionine (S)-S-oxide + [thioredoxin]-dithiol. In terms of biological role, has an important function as a repair enzyme for proteins that have been inactivated by oxidation. Catalyzes the reversible oxidation-reduction of methionine sulfoxide in proteins to methionine. In Brucella melitensis biotype 2 (strain ATCC 23457), this protein is Peptide methionine sulfoxide reductase MsrA.